The chain runs to 106 residues: Ribulose bisphosphate carboxylase small subunit (106 aa).

This sequence belongs to the RuBisCO small chain family. As to quaternary structure, heterohexadecamer of 8 large and 8 small subunits.

It localises to the plastid. The protein resides in the cyanelle. RuBisCO catalyzes two reactions: the carboxylation of D-ribulose 1,5-bisphosphate, the primary event in carbon dioxide fixation, as well as the oxidative fragmentation of the pentose substrate. Both reactions occur simultaneously and in competition at the same active site. Although the small subunit is not catalytic it is essential for maximal activity. This chain is Ribulose bisphosphate carboxylase small subunit, found in Cyanophora paradoxa.